The primary structure comprises 379 residues: Copper-containing nitrite reductase (379 aa).

A signal peptide (tat-type signal) is located at residues M1–A32. 2 consecutive Plastocyanin-like domains span residues E33–V214 and Y215–G379. The Cu cation site is built by H134, H139, H174, C175, H184, M189, and H345.

It belongs to the multicopper oxidase family. As to quaternary structure, homotrimer. Cu(2+) is required as a cofactor. It depends on Cu(+) as a cofactor. Requires FAD as cofactor. In terms of processing, predicted to be exported by the Tat system. The position of the signal peptide cleavage has not been experimentally proven.

Its subcellular location is the periplasm. The catalysed reaction is nitric oxide + Fe(III)-[cytochrome c] + H2O = Fe(II)-[cytochrome c] + nitrite + 2 H(+). It functions in the pathway nitrogen metabolism; nitrate reduction (denitrification); dinitrogen from nitrate: step 2/4. The protein is Copper-containing nitrite reductase (nirU) of Neorhizobium galegae (Rhizobium galegae).